Consider the following 553-residue polypeptide: LIM domain-containing protein B (553 aa).

Positions 43-115 (LTYKDPNVST…SINNNISNNN (73 aa)) are disordered. Residues 99–114 (GPGLPNNSINNNISNN) show a composition bias toward low complexity. LIM zinc-binding domains are found at residues 205 to 262 (PICG…ELFS), 263 to 322 (PRCF…RQKR), 328 to 387 (EICS…KQIL), 388 to 447 (NICG…FFGR), and 448 to 505 (QCFK…LPKE). The interval 534-553 (ELKKERERAAKEKEKESKAK) is disordered.

Its subcellular location is the cytoplasm. It localises to the cell cortex. The protein localises to the cytoskeleton. Its function is as follows. Regulates and controls rearrangements of the actin cytoskeleton. Required for tip formation, morphogenesis, cell adhesion and motility, chemotaxis and aggregates formation. May function downstream of paxB. This chain is LIM domain-containing protein B (limB), found in Dictyostelium discoideum (Social amoeba).